Consider the following 713-residue polypeptide: Constitutive lysine decarboxylase (713 aa).

At Lys-367 the chain carries N6-(pyridoxal phosphate)lysine.

It belongs to the Orn/Lys/Arg decarboxylase class-I family. Homodecamer; built of five dimers associated in a 5-fold symmetrical double-ring. Pyridoxal 5'-phosphate serves as cofactor.

The catalysed reaction is L-lysine + H(+) = cadaverine + CO2. Its function is as follows. Plays a role in lysine utilization by acting as a lysine decarboxylase. This is Constitutive lysine decarboxylase (ldcC) from Escherichia coli (strain K12).